We begin with the raw amino-acid sequence, 540 residues long: CUB domain-containing protein 2 (540 aa).

A signal peptide spans 1–22 (MLAEWGACLLLAVALLGPGLQA). Over 23–516 (QAMEGVKCGG…VSMVAQDTSD (494 aa)) the chain is Extracellular. 6 cysteine pairs are disulfide-bonded: cysteine 30–cysteine 56, cysteine 83–cysteine 106, cysteine 145–cysteine 171, cysteine 198–cysteine 218, cysteine 257–cysteine 283, and cysteine 314–cysteine 336. CUB domains lie at 30-143 (CGGV…YQKD), 145-255 (CGGV…YFSG), and 257-373 (CQEV…YIGV). The N-linked (GlcNAc...) asparagine glycan is linked to asparagine 40. Asparagine 267 carries N-linked (GlcNAc...) asparagine glycosylation. 3 N-linked (GlcNAc...) asparagine glycosylation sites follow: asparagine 377, asparagine 435, and asparagine 436. Residues 517–537 (IVFLGLCILAGILMVIAIVVL) form a helical membrane-spanning segment. Residues 538 to 540 (MLL) lie on the Cytoplasmic side of the membrane.

The protein resides in the membrane. The chain is CUB domain-containing protein 2 (CDCP2) from Homo sapiens (Human).